Consider the following 439-residue polypeptide: UDP-N-acetylmuramate--L-alanine ligase (439 aa).

Position 113 to 119 (Gly113 to Ser119) interacts with ATP.

The protein belongs to the MurCDEF family.

The protein resides in the cytoplasm. The enzyme catalyses UDP-N-acetyl-alpha-D-muramate + L-alanine + ATP = UDP-N-acetyl-alpha-D-muramoyl-L-alanine + ADP + phosphate + H(+). It functions in the pathway cell wall biogenesis; peptidoglycan biosynthesis. Cell wall formation. The chain is UDP-N-acetylmuramate--L-alanine ligase from Lactobacillus delbrueckii subsp. bulgaricus (strain ATCC 11842 / DSM 20081 / BCRC 10696 / JCM 1002 / NBRC 13953 / NCIMB 11778 / NCTC 12712 / WDCM 00102 / Lb 14).